The sequence spans 232 residues: Protein UL24 homolog (232 aa).

A disordered region spans residues 191 to 232 (PQKELFGIHKPENSEVETVGATKSTRKGAEKSRLSRRSRKSN).

The protein belongs to the herpesviridae UL24 family.

The protein resides in the virion. The protein localises to the host cytoplasm. It localises to the host nucleus. Its subcellular location is the host nucleolus. It is found in the host Golgi apparatus. Its function is as follows. May participate in nuclear egress of viral particles. Plays a role in the dispersal of several host nucleolar proteins including NCL/nucleolin and NPM1. Since deletion of host NCL/nucleolin negatively impact on nuclear egress, UL24 supposedly acts on this process through its effect on host nucleoli. In Elephas maximus (Indian elephant), this protein is Protein UL24 homolog.